The sequence spans 289 residues: MAPISSTWSRLIRFVAIETSLVHIGEPIDATMDVGLARREGKTIQAYEIIGSGSALDLSAQVSKNVLTVRELLMPLSREEIKTVRCLGLNYPVHATEANVAVPKFPNLFYKPVTSLIGPDGLITIPSVVQPPKEHQSDYEAELVIVIGKAAKNVSEDEALDYVLGYTAANDISFRKHQLAVSQWSFSKGFGSLLLTIRMAQTHSGNINRFSRDQIFNVKKTISFLSQGTTLEPGSIILTGTPDGVGFVRNPPLYLKDGDEVMTWIGSGIGTLANTVQEEKTCFASGGHE.

A divalent metal cation contacts are provided by Glu140, Glu142, and Asp171.

Belongs to the FAH family. As to quaternary structure, homodimer. It depends on Mg(2+) as a cofactor. Mn(2+) serves as cofactor.

It carries out the reaction (E)-caffeoylpyruvate + H2O = (E)-caffeate + pyruvate + H(+). Its pathway is secondary metabolite biosynthesis. Functionally, caffeoylpyruvate hydrolase; part of the gene cluster that mediates the fungal bioluminescence cycle. Involved in the recycling of oxyluciferin, a pyruvic acid adduct of caffeic acid, to caffeic acid. The fungal bioluminescence cycle begins with the hispidin synthetase that catalyzes the formation of hispidin which is further hydroxylated by the hispidin-3-hydroxylase, yielding the fungal luciferin 3-hydroxyhispidin. The luciferase then produces an endoperoxide as a high-energy intermediate with decomposition that yields oxyluciferin (also known as caffeoylpyruvate) and light emission. Oxyluciferin can be recycled to caffeic acid by caffeoylpyruvate hydrolase. The sequence is that of Caffeoylpyruvate hydrolase from Neonothopanus nambi (Agaricus nambi).